The following is a 163-amino-acid chain: Nucleotide-binding protein NT01EI_1072 (163 aa).

This sequence belongs to the YajQ family.

Nucleotide-binding protein. The polypeptide is Nucleotide-binding protein NT01EI_1072 (Edwardsiella ictaluri (strain 93-146)).